Reading from the N-terminus, the 336-residue chain is Phosphate acyltransferase (336 aa).

The protein belongs to the PlsX family. As to quaternary structure, homodimer. Probably interacts with PlsY.

The protein resides in the cytoplasm. The catalysed reaction is a fatty acyl-[ACP] + phosphate = an acyl phosphate + holo-[ACP]. It participates in lipid metabolism; phospholipid metabolism. Its function is as follows. Catalyzes the reversible formation of acyl-phosphate (acyl-PO(4)) from acyl-[acyl-carrier-protein] (acyl-ACP). This enzyme utilizes acyl-ACP as fatty acyl donor, but not acyl-CoA. In Ectopseudomonas mendocina (strain ymp) (Pseudomonas mendocina), this protein is Phosphate acyltransferase.